We begin with the raw amino-acid sequence, 558 residues long: Glypican-1 (558 aa).

Positions 1–23 (MELRARGWWLLCAAAALVACTRG) are cleaved as a signal peptide. 7 cysteine pairs are disulfide-bonded: cysteine 32/cysteine 68, cysteine 62/cysteine 256, cysteine 69/cysteine 259, cysteine 191/cysteine 343, cysteine 246/cysteine 279, cysteine 268/cysteine 415, and cysteine 272/cysteine 401. 2 N-linked (GlcNAc...) asparagine glycosylation sites follow: asparagine 79 and asparagine 116. The segment at 478–531 (FQDASDDGSGSGSGGGCPDDACGRRVSKKSSSSRTPLIHALPGLSEQEGQKTSA) is disordered. 3 O-linked (Xyl...) (heparan sulfate) serine glycosylation sites follow: serine 486, serine 488, and serine 490. Residue serine 530 is the site of GPI-anchor amidated serine attachment. The propeptide at 531–558 (AATRPEPHYFFLLFLFTLVLAAARPRWR) is removed in mature form.

This sequence belongs to the glypican family. In terms of processing, S-nitrosylated in a Cu(2+)-dependent manner. Nitric acid (NO) is released from the nitrosylated cysteines by ascorbate or by some other reducing agent, in a Cu(2+) or Zn(2+) dependent manner. This free nitric oxide is then capable of cleaving the heparan sulfate side chains. N- and O-glycosylated. N-glycosylation is mainly of the complex type containing sialic acid. O-glycosylated with heparan sulfate. The heparan sulfate chains can be cleaved either by the action of heparanase or, degraded by a deaminative process that uses nitric oxide (NO) released from the S-nitrosylated cysteines. This process is triggered by ascorbate, or by some other reducing agent, in a Cu(2+)- or Zn(2+) dependent manner. Cu(2+) ions are provided by ceruloproteins such as APP, PRNP or CP which associate with GCP1 in intracellular compartments or lipid rafts. Post-translationally, this cell-associated glypican is further processed to give rise to a medium-released species. Nervous system.

It is found in the cell membrane. Its subcellular location is the endosome. The protein resides in the secreted. The protein localises to the extracellular space. Cell surface proteoglycan that bears heparan sulfate. May act as a catalyst in increasing the rate of conversion of prion protein PRPN(C) to PRNP(Sc) via associating (via the heparan sulfate side chains) with both forms of PRPN, targeting them to lipid rafts and facilitating their interaction. Required for proper skeletal muscle differentiation by sequestering FGF2 in lipid rafts preventing its binding to receptors (FGFRs) and inhibiting the FGF-mediated signaling. Binds Cu(2+) or Zn(2+) ions. Binds, via the heparan sulfate side chains, alpha-4 (V) collagen and participates in Schwann cell myelination. The polypeptide is Glypican-1 (Gpc1) (Rattus norvegicus (Rat)).